Here is a 588-residue protein sequence, read N- to C-terminus: Probable cytochrome c oxidase subunit 1-beta (588 aa).

The segment at 1–26 (MTATPAQRRPALPATRPYPARHGPKG) is disordered. The chain crosses the membrane as a helical span at residues 43–63 (VLYLVSATGFFLIGGLLALLM). Position 87 (histidine 87) interacts with Fe(II)-heme a. 6 helical membrane-spanning segments follow: residues 90–110 (IMLLFYATPVVFGFANAVLPL), 128–148 (WLYLFGATMATAGFLTPGGAA), 171–191 (LWILGLAVSGLGTILGAVNMI), 214–234 (ILITSILVLLAFPILTAALMA), 259–279 (LFWFFGHPEVYIIALPFFGII), and 291–311 (IFGYTALVYATLAIAALSMAV). Residues histidine 265 and tyrosine 269 each contribute to the Cu cation site. A cross-link (1'-histidyl-3'-tyrosine (His-Tyr)) is located at residues 265–269 (HPEVY). Cu cation contacts are provided by histidine 314 and histidine 315. The next 2 membrane-spanning stretches (helical) occupy residues 320–340 (GAVLLPFFSMMTFLIAVPTGV) and 360–380 (MLFAIGFIVTFLLGGLSGVIL). Residue histidine 398 participates in heme a3 binding. 3 helical membrane passes run 399–419 (FHYVLFGTIVFATFAGIYFWF), 434–454 (LHFWTTFLGFHLTFLVQHWLG), and 477–497 (VSTIGSFLLGISMVTFVWNGF). Histidine 400 contributes to the Fe(II)-heme a binding site. Residues 557–588 (AEAHAGRRAGHGAGAELSVPSTVATKDDDHTS) form a disordered region.

It belongs to the heme-copper respiratory oxidase family. In terms of assembly, associates with subunits II, III and IV to form cytochrome c oxidase. Requires Cu(2+) as cofactor. It depends on heme as a cofactor.

Its subcellular location is the cell membrane. The enzyme catalyses 4 Fe(II)-[cytochrome c] + O2 + 8 H(+)(in) = 4 Fe(III)-[cytochrome c] + 2 H2O + 4 H(+)(out). Its pathway is energy metabolism; oxidative phosphorylation. Its function is as follows. Cytochrome c oxidase is the component of the respiratory chain that catalyzes the reduction of oxygen to water. Subunits 1-3 form the functional core of the enzyme complex. CO I is the catalytic subunit of the enzyme. Electrons originating in cytochrome c are transferred via the copper A center of subunit 2 and heme A of subunit 1 to the bimetallic center formed by heme A3 and copper B. The protein is Probable cytochrome c oxidase subunit 1-beta (ctaD2) of Nocardia farcinica (strain IFM 10152).